The primary structure comprises 481 residues: 3-isopropylmalate dehydratase large subunit (481 aa).

[4Fe-4S] cluster-binding residues include Cys357, Cys417, and Cys420.

It belongs to the aconitase/IPM isomerase family. LeuC type 1 subfamily. In terms of assembly, heterodimer of LeuC and LeuD. [4Fe-4S] cluster is required as a cofactor.

It carries out the reaction (2R,3S)-3-isopropylmalate = (2S)-2-isopropylmalate. The protein operates within amino-acid biosynthesis; L-leucine biosynthesis; L-leucine from 3-methyl-2-oxobutanoate: step 2/4. Catalyzes the isomerization between 2-isopropylmalate and 3-isopropylmalate, via the formation of 2-isopropylmaleate. The protein is 3-isopropylmalate dehydratase large subunit of Mycolicibacterium gilvum (strain PYR-GCK) (Mycobacterium gilvum (strain PYR-GCK)).